Reading from the N-terminus, the 379-residue chain is Chaperone protein DnaJ (379 aa).

Residues 5–70 (DYYEVLGVSR…QKRAAYDQYG (66 aa)) enclose the J domain. Residues 134–212 (GVTKEIRIPT…CHGHGRVEKS (79 aa)) form a CR-type zinc finger. C147, C150, C164, C167, C186, C189, C200, and C203 together coordinate Zn(2+). 4 CXXCXGXG motif repeats span residues 147 to 154 (CDVCHGSG), 164 to 171 (CPTCHGAG), 186 to 193 (CPHCHGRG), and 200 to 207 (CNKCHGHG).

The protein belongs to the DnaJ family. In terms of assembly, homodimer. The cofactor is Zn(2+).

The protein localises to the cytoplasm. Participates actively in the response to hyperosmotic and heat shock by preventing the aggregation of stress-denatured proteins and by disaggregating proteins, also in an autonomous, DnaK-independent fashion. Unfolded proteins bind initially to DnaJ; upon interaction with the DnaJ-bound protein, DnaK hydrolyzes its bound ATP, resulting in the formation of a stable complex. GrpE releases ADP from DnaK; ATP binding to DnaK triggers the release of the substrate protein, thus completing the reaction cycle. Several rounds of ATP-dependent interactions between DnaJ, DnaK and GrpE are required for fully efficient folding. Also involved, together with DnaK and GrpE, in the DNA replication of plasmids through activation of initiation proteins. This chain is Chaperone protein DnaJ, found in Yersinia pseudotuberculosis serotype O:1b (strain IP 31758).